We begin with the raw amino-acid sequence, 331 residues long: 6-phosphogluconolactonase (331 aa).

Belongs to the cycloisomerase 2 family.

The catalysed reaction is 6-phospho-D-glucono-1,5-lactone + H2O = 6-phospho-D-gluconate + H(+). It functions in the pathway carbohydrate degradation; pentose phosphate pathway; D-ribulose 5-phosphate from D-glucose 6-phosphate (oxidative stage): step 2/3. Functionally, catalyzes the hydrolysis of 6-phosphogluconolactone to 6-phosphogluconate. This chain is 6-phosphogluconolactonase, found in Salmonella paratyphi A (strain ATCC 9150 / SARB42).